A 93-amino-acid chain; its full sequence is Protein Tat (93 aa).

Residues 1–24 (MEPVDPELEPWNHPGSQPKTACNN) are interaction with human CREBBP. The tract at residues 1–48 (MEPVDPELEPWNHPGSQPKTACNNCHCKVCCYHCVYCFTKKGLGISYG) is transactivation. Zn(2+)-binding residues include Cys22, Cys25, and Cys27. Positions 22-37 (CNNCHCKVCCYHCVYC) are cysteine-rich. At Lys28 the chain carries N6-acetyllysine; by host PCAF. Zn(2+) is bound by residues Cys30, His33, Cys34, and Cys37. Positions 38 to 48 (FTKKGLGISYG) are core. Residues 48 to 58 (GRKKRSQRRRT) show a composition bias toward basic residues. Residues 48–93 (GRKKRSQRRRTPQSNKSHQDPLPKQPLSQRLGDQTGQKEQKKTLES) form a disordered region. A Nuclear localization signal, RNA-binding (TAR), and protein transduction motif is present at residues 49-57 (RKKRSQRRR). Positions 49-86 (RKKRSQRRRTPQSNKSHQDPLPKQPLSQRLGDQTGQKE) are interaction with the host capping enzyme RNGTT. 2 positions are modified to N6-acetyllysine; by host EP300 and GCN5L2: Lys50 and Lys51. Residue Arg52 is modified to Asymmetric dimethylarginine; by host PRMT6. Lys71 is covalently cross-linked (Glycyl lysine isopeptide (Lys-Gly) (interchain with G-Cter in ubiquitin)). Residues 73-82 (PLSQRLGDQT) are compositionally biased toward polar residues. Residues 83–93 (GQKEQKKTLES) are compositionally biased toward basic and acidic residues.

It belongs to the lentiviruses Tat family. Interacts with host CCNT1. Associates with the P-TEFb complex composed at least of Tat, P-TEFb (CDK9 and CCNT1), TAR RNA, RNA Pol II. Recruits the HATs CREBBP, TAF1/TFIID, EP300, PCAF and GCN5L2. Interacts with host KAT5/Tip60; this interaction targets the latter to degradation. Interacts with the host deacetylase SIRT1. Interacts with host capping enzyme RNGTT; this interaction stimulates RNGTT. Binds to host KDR, and to the host integrins ITGAV/ITGB3 and ITGA5/ITGB1. Interacts with host KPNB1/importin beta-1 without previous binding to KPNA1/importin alpha-1. Interacts with EIF2AK2. Interacts with host nucleosome assembly protein NAP1L1; this interaction may be required for the transport of Tat within the nucleus, since the two proteins interact at the nuclear rim. Interacts with host C1QBP/SF2P32; this interaction involves lysine-acetylated Tat. Interacts with the host chemokine receptors CCR2, CCR3 and CXCR4. Interacts with host DPP4/CD26; this interaction may trigger an anti-proliferative effect. Interacts with host LDLR. Interacts with the host extracellular matrix metalloproteinase MMP1. Interacts with host PRMT6; this interaction mediates Tat's methylation. Interacts with, and is ubiquitinated by MDM2/Hdm2. Interacts with host PSMC3 and HTATIP2. Interacts with STAB1; this interaction may overcome SATB1-mediated repression of IL2 and IL2RA (interleukin) in T cells by binding to the same domain than HDAC1. Interacts (when acetylated) with human CDK13, thereby increasing HIV-1 mRNA splicing and promoting the production of the doubly spliced HIV-1 protein Nef. Interacts with host TBP; this interaction modulates the activity of transcriptional pre-initiation complex. Interacts with host RELA. Post-translationally, asymmetrical arginine methylation by host PRMT6 seems to diminish the transactivation capacity of Tat and affects the interaction with host CCNT1. In terms of processing, acetylation by EP300, CREBBP, GCN5L2/GCN5 and PCAF regulates the transactivation activity of Tat. EP300-mediated acetylation of Lys-50 promotes dissociation of Tat from the TAR RNA through the competitive binding to PCAF's bromodomain. In addition, the non-acetylated Tat's N-terminus can also interact with PCAF. PCAF-mediated acetylation of Lys-28 enhances Tat's binding to CCNT1. Lys-50 is deacetylated by SIRT1. Polyubiquitination by host MDM2 does not target Tat to degradation, but activates its transactivation function and fosters interaction with CCNT1 and TAR RNA. Post-translationally, phosphorylated by EIF2AK2 on serine and threonine residues adjacent to the basic region important for TAR RNA binding and function. Phosphorylation of Tat by EIF2AK2 is dependent on the prior activation of EIF2AK2 by dsRNA.

It is found in the host nucleus. The protein resides in the host nucleolus. The protein localises to the host cytoplasm. Its subcellular location is the secreted. Transcriptional activator that increases RNA Pol II processivity, thereby increasing the level of full-length viral transcripts. Recognizes a hairpin structure at the 5'-LTR of the nascent viral mRNAs referred to as the transactivation responsive RNA element (TAR) and recruits the cyclin T1-CDK9 complex (P-TEFb complex) that will in turn hyperphosphorylate the RNA polymerase II to allow efficient elongation. The CDK9 component of P-TEFb and other Tat-activated kinases hyperphosphorylate the C-terminus of RNA Pol II that becomes stabilized and much more processive. Other factors such as HTATSF1/Tat-SF1, SUPT5H/SPT5, and HTATIP2 are also important for Tat's function. Besides its effect on RNA Pol II processivity, Tat induces chromatin remodeling of proviral genes by recruiting the histone acetyltransferases (HATs) CREBBP, EP300 and PCAF to the chromatin. This also contributes to the increase in proviral transcription rate, especially when the provirus integrates in transcriptionally silent region of the host genome. To ensure maximal activation of the LTR, Tat mediates nuclear translocation of NF-kappa-B by interacting with host RELA. Through its interaction with host TBP, Tat may also modulate transcription initiation. Tat can reactivate a latently infected cell by penetrating in it and transactivating its LTR promoter. In the cytoplasm, Tat is thought to act as a translational activator of HIV-1 mRNAs. Its function is as follows. Extracellular circulating Tat can be endocytosed by surrounding uninfected cells via the binding to several surface receptors such as CD26, CXCR4, heparan sulfate proteoglycans (HSPG) or LDLR. Neurons are rarely infected, but they internalize Tat via their LDLR. Through its interaction with nuclear HATs, Tat is potentially able to control the acetylation-dependent cellular gene expression. Modulates the expression of many cellular genes involved in cell survival, proliferation or in coding for cytokines or cytokine receptors. Tat plays a role in T-cell and neurons apoptosis. Tat induced neurotoxicity and apoptosis probably contribute to neuroAIDS. Circulating Tat also acts as a chemokine-like and/or growth factor-like molecule that binds to specific receptors on the surface of the cells, affecting many cellular pathways. In the vascular system, Tat binds to ITGAV/ITGB3 and ITGA5/ITGB1 integrins dimers at the surface of endothelial cells and competes with bFGF for heparin-binding sites, leading to an excess of soluble bFGF. This chain is Protein Tat, found in Pan troglodytes (Chimpanzee).